A 631-amino-acid polypeptide reads, in one-letter code: Tail sheath protein (631 aa).

Belongs to the myoviridae tail sheath protein family. Homomultimer.

The protein resides in the virion. The protein localises to the host cytoplasm. Its function is as follows. Polymerizes as an extended structure around the baseplate-tail tube complex. During ejection, the sheath shifts to a contracted form, thereby making the inner tail tube protrude through the host cell envelope. This is Tail sheath protein from Salmonella typhi.